A 103-amino-acid polypeptide reads, in one-letter code: Small ribosomal subunit protein uS10 (103 aa).

Belongs to the universal ribosomal protein uS10 family. As to quaternary structure, part of the 30S ribosomal subunit.

In terms of biological role, involved in the binding of tRNA to the ribosomes. This Tolumonas auensis (strain DSM 9187 / NBRC 110442 / TA 4) protein is Small ribosomal subunit protein uS10.